The sequence spans 172 residues: S-ribosylhomocysteine lyase (172 aa).

Positions 54, 58, and 128 each coordinate Fe cation.

Belongs to the LuxS family. In terms of assembly, homodimer. It depends on Fe cation as a cofactor.

It carries out the reaction S-(5-deoxy-D-ribos-5-yl)-L-homocysteine = (S)-4,5-dihydroxypentane-2,3-dione + L-homocysteine. Functionally, involved in the synthesis of autoinducer 2 (AI-2) which is secreted by bacteria and is used to communicate both the cell density and the metabolic potential of the environment. The regulation of gene expression in response to changes in cell density is called quorum sensing. Catalyzes the transformation of S-ribosylhomocysteine (RHC) to homocysteine (HC) and 4,5-dihydroxy-2,3-pentadione (DPD). This chain is S-ribosylhomocysteine lyase, found in Vibrio alginolyticus.